The following is a 250-amino-acid chain: 3-deoxy-manno-octulosonate cytidylyltransferase (250 aa).

This sequence belongs to the KdsB family.

It localises to the cytoplasm. The enzyme catalyses 3-deoxy-alpha-D-manno-oct-2-ulosonate + CTP = CMP-3-deoxy-beta-D-manno-octulosonate + diphosphate. It participates in nucleotide-sugar biosynthesis; CMP-3-deoxy-D-manno-octulosonate biosynthesis; CMP-3-deoxy-D-manno-octulosonate from 3-deoxy-D-manno-octulosonate and CTP: step 1/1. The protein operates within bacterial outer membrane biogenesis; lipopolysaccharide biosynthesis. Its function is as follows. Activates KDO (a required 8-carbon sugar) for incorporation into bacterial lipopolysaccharide in Gram-negative bacteria. This chain is 3-deoxy-manno-octulosonate cytidylyltransferase, found in Syntrophobacter fumaroxidans (strain DSM 10017 / MPOB).